The primary structure comprises 594 residues: MGTARIAPGLALLLCCPVLSSAYALVDADDVMTKEEQIFLLHRAQAQCGKRLKEVLQRPADIMESDKGWTSASTSGKPRKDKASGKLYPESEEDKEAPTDSRYRGRPCLPEWDHILCWPLGAPQGEVVAVPCPDYIYDFNHKGHAYRRCDRNGSWELVPGHNRTWANYSECVQFLTNETREREVFDRLGMIYTVGYSMSLASLTVAVLILAYFRRLHCTRNYIHMHLFLSFMLRAVSIFVKDAVLYSGATLDEAERLTEEELRAIAQAPPPPATAAAGYAGCRVAVTFFLYFLATNYYWILVEGLYLHSLIFMAFFSEKKYLWGFTVFGWGLPAVFVAVWVSVRATLANTGCWDLSSGNKKWIIQVPILASIVLHFILFINIVRVLATKLRETNAGRCDTRQQYRKLLKSTLVLMPLFGVHYIVFMATPYTEVSGTLWQVQMHYEMLFNSFQGFFVAIIYCFCNGEVQAEIKKSWSRWTLALDFKRKARSGSSSYSYGPMVSHTSVTNVGPRVGLGLPLSPRLLPTATTNGHPQLPGHAKPGTPALETLETTPPATAAPKDDGFLNGSCSGLDEEASGPEQPPALLQEEWETVM.

Residues 1–28 (MGTARIAPGLALLLCCPVLSSAYALVDA) form the signal peptide. Topologically, residues 29–188 (DDVMTKEEQI…TREREVFDRL (160 aa)) are extracellular. Cystine bridges form between Cys-48-Cys-117, Cys-108-Cys-149, and Cys-132-Cys-171. A disordered region spans residues 66 to 102 (DKGWTSASTSGKPRKDKASGKLYPESEEDKEAPTDSR). Asn-152, Asn-162, Asn-167, and Asn-177 each carry an N-linked (GlcNAc...) asparagine glycan. The helical transmembrane segment at 189–209 (GMIYTVGYSMSLASLTVAVLI) threads the bilayer. Residues 210–223 (LAYFRRLHCTRNYI) lie on the Cytoplasmic side of the membrane. A helical transmembrane segment spans residues 224–244 (HMHLFLSFMLRAVSIFVKDAV). The Extracellular segment spans residues 245–295 (LYSGATLDEAERLTEEELRAIAQAPPPPATAAAGYAGCRVAVTFFLYFLAT). The chain crosses the membrane as a helical span at residues 296 to 316 (NYYWILVEGLYLHSLIFMAFF). Residues 317-319 (SEK) are Cytoplasmic-facing. A helical transmembrane segment spans residues 320–340 (KYLWGFTVFGWGLPAVFVAVW). At 341 to 361 (VSVRATLANTGCWDLSSGNKK) the chain is on the extracellular side. The chain crosses the membrane as a helical span at residues 362–382 (WIIQVPILASIVLHFILFINI). The Cytoplasmic segment spans residues 383–405 (VRVLATKLRETNAGRCDTRQQYR). Residues 406-426 (KLLKSTLVLMPLFGVHYIVFM) form a helical membrane-spanning segment. Residues 427–440 (ATPYTEVSGTLWQV) lie on the Extracellular side of the membrane. Residues 441–461 (QMHYEMLFNSFQGFFVAIIYC) form a helical membrane-spanning segment. Over 462 to 594 (FCNGEVQAEI…LLQEEWETVM (133 aa)) the chain is Cytoplasmic. Positions 475–478 (WSRW) match the Important for interaction with G proteins motif. The interval 525-594 (PTATTNGHPQ…LLQEEWETVM (70 aa)) is disordered. The span at 543–558 (TPALETLETTPPATAA) shows a compositional bias: low complexity. A Phosphothreonine modification is found at Thr-552.

The protein belongs to the G-protein coupled receptor 2 family. As to quaternary structure, homodimer in the absence of bound ligand. Peptide hormone binding leads to dissociation of the homodimer. Post-translationally, N-glycosylated.

The protein resides in the cell membrane. Its function is as follows. G-protein-coupled receptor for parathyroid hormone (PTH) and for parathyroid hormone-related peptide (PTHLH). Ligand binding causes a conformation change that triggers signaling via guanine nucleotide-binding proteins (G proteins) and modulates the activity of downstream effectors, such as adenylate cyclase (cAMP). PTH1R is coupled to G(s) G alpha proteins and mediates activation of adenylate cyclase activity. PTHLH dissociates from PTH1R more rapidly than PTH; as consequence, the cAMP response induced by PTHLH decays faster than the response induced by PTH. This is Parathyroid hormone/parathyroid hormone-related peptide receptor (PTH1R) from Pongo abelii (Sumatran orangutan).